Reading from the N-terminus, the 245-residue chain is 1-(5-phosphoribosyl)-5-[(5-phosphoribosylamino)methylideneamino] imidazole-4-carboxamide isomerase (245 aa).

Residue D8 is the Proton acceptor of the active site. The Proton donor role is filled by D129.

The protein belongs to the HisA/HisF family.

It is found in the cytoplasm. It catalyses the reaction 1-(5-phospho-beta-D-ribosyl)-5-[(5-phospho-beta-D-ribosylamino)methylideneamino]imidazole-4-carboxamide = 5-[(5-phospho-1-deoxy-D-ribulos-1-ylimino)methylamino]-1-(5-phospho-beta-D-ribosyl)imidazole-4-carboxamide. It participates in amino-acid biosynthesis; L-histidine biosynthesis; L-histidine from 5-phospho-alpha-D-ribose 1-diphosphate: step 4/9. This chain is 1-(5-phosphoribosyl)-5-[(5-phosphoribosylamino)methylideneamino] imidazole-4-carboxamide isomerase, found in Heliobacterium modesticaldum (strain ATCC 51547 / Ice1).